Here is a 181-residue protein sequence, read N- to C-terminus: uncharacterized protein (181 aa).

In terms of domain architecture, Macro spans 1–178; it reads MVVAYKLSNG…VFKKVFDNSL (178 aa).

This is an uncharacterized protein from Sulfolobus acidocaldarius (strain ATCC 33909 / DSM 639 / JCM 8929 / NBRC 15157 / NCIMB 11770).